The sequence spans 161 residues: Cell division protein SepF (161 aa).

The protein belongs to the SepF family. In terms of assembly, homodimer. Interacts with FtsZ.

Its subcellular location is the cytoplasm. Cell division protein that is part of the divisome complex and is recruited early to the Z-ring. Probably stimulates Z-ring formation, perhaps through the cross-linking of FtsZ protofilaments. Its function overlaps with FtsA. The polypeptide is Cell division protein SepF (Finegoldia magna (strain ATCC 29328 / DSM 20472 / WAL 2508) (Peptostreptococcus magnus)).